The chain runs to 363 residues: uncharacterized protein (363 aa).

Transmembrane regions (helical) follow at residues 20 to 40 (WFFTLVEMILAVGGLIMNTNI), 63 to 83 (INFAILSGFQLARNFFLFLVM), 101 to 121 (FPLIFCYIHCAASFFLLGVQS), 141 to 161 (SVWQSTIAAVCVALSLLFTAF), 186 to 206 (FSLLTLLILLHATGLIFIMLA), 227 to 247 (IFKYETLAWQISLFISGCVVL), and 268 to 288 (FLIVPLLISFMHPLYLIWYVL). The tract at residues 329 to 363 (PRADLTPNDTLHMESKKKPLSQSPRVVIEEEDVAE) is disordered.

It localises to the membrane. This is an uncharacterized protein from Caenorhabditis elegans.